The following is a 501-amino-acid chain: Ribonuclease Y (501 aa).

Residues 7–27 (LVVIALLGALTLLTAGHVLAL) form a helical membrane-spanning segment. The region spanning 190–256 (VVRAVPLPEE…RLTLEKLVAD (67 aa)) is the KH domain. The HD domain occupies 316 to 409 (VLAHLVESAH…TQAADAISGG (94 aa)).

The protein belongs to the RNase Y family.

It is found in the cell membrane. Its function is as follows. Endoribonuclease that initiates mRNA decay. This chain is Ribonuclease Y, found in Thermobifida fusca (strain YX).